The primary structure comprises 778 residues: Endonuclease MutS2 (778 aa).

ATP is bound at residue 328–335 (GPNTGGKT). The Smr domain occupies 703 to 778 (LDLRGKRYEE…GSGCTIANLG (76 aa)).

It belongs to the DNA mismatch repair MutS family. MutS2 subfamily. As to quaternary structure, homodimer. Binds to stalled ribosomes, contacting rRNA.

Functionally, endonuclease that is involved in the suppression of homologous recombination and thus may have a key role in the control of bacterial genetic diversity. Acts as a ribosome collision sensor, splitting the ribosome into its 2 subunits. Detects stalled/collided 70S ribosomes which it binds and splits by an ATP-hydrolysis driven conformational change. Acts upstream of the ribosome quality control system (RQC), a ribosome-associated complex that mediates the extraction of incompletely synthesized nascent chains from stalled ribosomes and their subsequent degradation. Probably generates substrates for RQC. In Streptococcus equi subsp. zooepidemicus (strain H70), this protein is Endonuclease MutS2.